We begin with the raw amino-acid sequence, 264 residues long: 2',3'-cyclic-nucleotide 2'-phosphodiesterase (264 aa).

4 residues coordinate Fe cation: Asp-8, Glu-39, Asn-40, and Asn-67. The active-site Proton donor is the His-68. Fe cation is bound by residues His-150, His-175, and His-177.

It belongs to the YmdB-like family. Homodimer. It depends on Fe(2+) as a cofactor. The cofactor is Fe(3+).

Its subcellular location is the cytoplasm. The enzyme catalyses a nucleoside 2',3'-cyclic phosphate + H2O = a nucleoside 3'-phosphate + H(+). Plays a central, regulatory role in the late adaptive responses and affects the levels of many genes. May act via regulation of cAMP levels. Decreases the expression of motility genes and induces genes involved in biofilm formation, by controlling the expression of SlrR. Required for formation of intercellular nanotubes that bridge neighboring cells to allow molecular exchange. Plays a key role in directing the early stages of colony development. In vitro, has a metal-dependent phosphodiesterase activity against 2',3'-cAMP and 2',3'-cGMP. Also has 3',5'-cyclic-nucleotide phosphodiesterase activity, but cannot use cyclic di-AMP or cyclic di-GMP, and does not have phosphatase activity. The protein is 2',3'-cyclic-nucleotide 2'-phosphodiesterase (ymdB) of Bacillus subtilis (strain 168).